The primary structure comprises 375 residues: 2-methylcitrate synthase (375 aa).

Substrate is bound by residues Lys-72 and His-187. His-222 is a catalytic residue. 255–259 provides a ligand contact to CoA; sequence KIMGF. His-261 is a catalytic residue. Position 270 (Arg-270) interacts with substrate. Asp-312 is an active-site residue. 2 residues coordinate substrate: Arg-337 and Arg-356.

It belongs to the citrate synthase family. Homodimer.

It catalyses the reaction propanoyl-CoA + oxaloacetate + H2O = (2S,3S)-2-methylcitrate + CoA + H(+). It carries out the reaction oxaloacetate + acetyl-CoA + H2O = citrate + CoA + H(+). It participates in organic acid metabolism; propanoate degradation. The protein operates within carbohydrate metabolism; tricarboxylic acid cycle; isocitrate from oxaloacetate: step 1/2. Involved in the catabolism of short chain fatty acids (SCFA) via the tricarboxylic acid (TCA)(acetyl degradation route) and via the 2-methylcitrate cycle II (propionate degradation route). Catalyzes the Claisen condensation of propionyl-CoA and oxaloacetate (OAA) to yield 2-methylcitrate (2-MC) and CoA. Catalyzes the condensation of oxaloacetate with acetyl-CoA. This chain is 2-methylcitrate synthase (prpC), found in Shewanella oneidensis (strain ATCC 700550 / JCM 31522 / CIP 106686 / LMG 19005 / NCIMB 14063 / MR-1).